Here is a 159-residue protein sequence, read N- to C-terminus: Transcription elongation factor GreA (159 aa).

A coiled-coil region spans residues 44–75 (SENAEYDAAREQQSQTEARIADLENKLSTATI).

The protein belongs to the GreA/GreB family.

In terms of biological role, necessary for efficient RNA polymerase transcription elongation past template-encoded arresting sites. The arresting sites in DNA have the property of trapping a certain fraction of elongating RNA polymerases that pass through, resulting in locked ternary complexes. Cleavage of the nascent transcript by cleavage factors such as GreA or GreB allows the resumption of elongation from the new 3'terminus. GreA releases sequences of 2 to 3 nucleotides. This is Transcription elongation factor GreA from Chlorobium limicola (strain DSM 245 / NBRC 103803 / 6330).